The sequence spans 96 residues: MKIRPLHDRVLVKRQEVESKSAGGIVLTGSAAGKSTRGTVTAIGKGRVLDNGQIKPLDVKVGDTVIFNEGYGAKTEKINTEELLLLTESDILAIVE.

It belongs to the GroES chaperonin family. Heptamer of 7 subunits arranged in a ring. Interacts with the chaperonin GroEL.

Its subcellular location is the cytoplasm. Its function is as follows. Together with the chaperonin GroEL, plays an essential role in assisting protein folding. The GroEL-GroES system forms a nano-cage that allows encapsulation of the non-native substrate proteins and provides a physical environment optimized to promote and accelerate protein folding. GroES binds to the apical surface of the GroEL ring, thereby capping the opening of the GroEL channel. The sequence is that of Co-chaperonin GroES from Buchnera aphidicola subsp. Myzus persicae (Myzus persicae primary endosymbiont).